A 249-amino-acid chain; its full sequence is tRNA pseudouridine synthase A (249 aa).

D53 acts as the Nucleophile in catalysis. Y111 lines the substrate pocket.

Belongs to the tRNA pseudouridine synthase TruA family. In terms of assembly, homodimer.

The catalysed reaction is uridine(38/39/40) in tRNA = pseudouridine(38/39/40) in tRNA. Its function is as follows. Formation of pseudouridine at positions 38, 39 and 40 in the anticodon stem and loop of transfer RNAs. The polypeptide is tRNA pseudouridine synthase A (Streptococcus gordonii (strain Challis / ATCC 35105 / BCRC 15272 / CH1 / DL1 / V288)).